The chain runs to 237 residues: ADTIVAVELDSYPNTDIGDPSYPHIGIDIKSIRSKSTARWNMQTGKVGTAHISYNSVAKRLSAVVSYTGSSSTTVSYDVDLNNVLPEWVRVGLSATTGLYKETNTILSWSFTSKLKTNSIADANSLHFSFNQFSQNPKDLILQSDATTDSDGNLELTKVSSSGDPQGSSVGRALFYAPVHIWEKSAVVAGFDATFTFLIKSPDRDPADGITFFIANTDTSIPSGSGGRLLGLFPDAN.

2 residues coordinate Mn(2+): Glu-8 and Asp-10. Ca(2+)-binding residues include Asp-10, Tyr-12, Asn-14, and Asp-19. A carbohydrate is bound at residue Tyr-12. Positions 19, 24, and 34 each coordinate Mn(2+). 99–100 lines the a carbohydrate pocket; the sequence is LY. A Ca(2+)-binding site is contributed by Asp-208. Arg-228 provides a ligand contact to a carbohydrate.

This sequence belongs to the leguminous lectin family. Equilibrium between homodimer and homotetramer. Oligomerization is pH-dependent with homotetramers forming at pH 6.5 and above. The beta and gamma chains are produced by partial proteolytic processing of the lectin alpha chain by an asparaginyl endopeptidase. Mixture of 60% alpha lectin and 40% of its beta and gamma proteolytic fragments.

In terms of biological role, D-mannose/D-glucose-binding lectin. Has anti-inflammatory activity in rats. Induces histamine release in mast cells from rat. Induces lymphocyte proliferation and IFNG production. This is Lectin alpha chain from Dioclea guianensis.